The sequence spans 261 residues: WW domain-binding protein 2 (261 aa).

Residues 1–84 enclose the GRAM domain; sequence MALNKNHSEG…YLMKDCEIKQ (84 aa). Tyr-192 carries the phosphotyrosine modification. A PPxY motif 1 motif is present at residues 196–200; that stretch reads PPPPY. The span at 196–209 shows a compositional bias: pro residues; it reads PPPPYPGPMEPPVS. Residues 196 to 261 are disordered; sequence PPPPYPGPME…YYPPEDKKTQ (66 aa). Residues 210 to 230 are compositionally biased toward low complexity; it reads GPSAPATPAAEAKAAEAAASA. Tyr-231 is subject to Phosphotyrosine. A compositionally biased stretch (pro residues) spans 245–254; that stretch reads SQPPPPPYYP. Residues 248–252 carry the PPxY motif 2 motif; it reads PPPPY.

Binds to the WW domain of YAP1, WWP1 and WWP2. Interacts with NEDD4. Interacts with ESR1 and UBE3A. Phosphorylated in repsonse to EGF as well as estrogen and progesterone hormones. Tyr-192 and Tyr-231 are phosphorylated by YES and SRC inducing nuclear translocation. In terms of tissue distribution, expressed in the ear and the eye. Isoform 1 is expressed in brain, inner ear and organ of Corti. Isoform 2 is only detected in brain.

It is found in the cytoplasm. The protein resides in the nucleus. Acts as a transcriptional coactivator of estrogen and progesterone receptors (ESR1 and PGR) upon hormone activation. In presence of estrogen, binds to ESR1-responsive promoters. Synergizes with YAP1 to enhance PGR activity. Modulates expression of post-synaptic scaffolding proteins via regulation of ESR1, ESR2 and PGR. In Mus musculus (Mouse), this protein is WW domain-binding protein 2 (Wbp2).